Here is a 181-residue protein sequence, read N- to C-terminus: Regulator of G-protein signaling 10 (181 aa).

The interval 1 to 35 (MFTRAVSRLSRKRPPSDIHDGDGSSSSGHQSLKST) is disordered. Residues Ser-24 and Ser-41 each carry the phosphoserine modification. The region spanning 41 to 156 (SLENLLEDPE…LKSDLFLKHR (116 aa)) is the RGS domain. Residue Cys-74 is the site of S-palmitoyl cysteine attachment. The tract at residues 157–181 (RTEEEEEDPPDAQTAAKRASRIYNT) is disordered. Ser-176 is subject to Phosphoserine.

Interacts with GNAZ, GNAI1 and GNAI3. Associates specifically with the activated, GTP-bound forms of GNAZ and GNAI3.

The protein localises to the cytoplasm. It is found in the cytosol. Its subcellular location is the nucleus. Functionally, regulates G protein-coupled receptor signaling cascades, including signaling downstream of the muscarinic acetylcholine receptor CHRM2. Inhibits signal transduction by increasing the GTPase activity of G protein alpha subunits, thereby driving them into their inactive GDP-bound form. Modulates the activity of potassium channels that are activated in response to CHRM2 signaling. Activity on GNAZ is inhibited by palmitoylation of the G-protein. The protein is Regulator of G-protein signaling 10 (Rgs10) of Rattus norvegicus (Rat).